The following is a 318-amino-acid chain: Methionyl-tRNA formyltransferase (318 aa).

S112 to P115 is a (6S)-5,6,7,8-tetrahydrofolate binding site.

Belongs to the Fmt family.

It carries out the reaction L-methionyl-tRNA(fMet) + (6R)-10-formyltetrahydrofolate = N-formyl-L-methionyl-tRNA(fMet) + (6S)-5,6,7,8-tetrahydrofolate + H(+). In terms of biological role, attaches a formyl group to the free amino group of methionyl-tRNA(fMet). The formyl group appears to play a dual role in the initiator identity of N-formylmethionyl-tRNA by promoting its recognition by IF2 and preventing the misappropriation of this tRNA by the elongation apparatus. This chain is Methionyl-tRNA formyltransferase, found in Shewanella sp. (strain W3-18-1).